An 89-amino-acid polypeptide reads, in one-letter code: Co-chaperonin GroES (89 aa).

Belongs to the GroES chaperonin family. In terms of assembly, heptamer of 7 subunits arranged in a ring. Interacts with the chaperonin GroEL.

It localises to the cytoplasm. Together with the chaperonin GroEL, plays an essential role in assisting protein folding. The GroEL-GroES system forms a nano-cage that allows encapsulation of the non-native substrate proteins and provides a physical environment optimized to promote and accelerate protein folding. GroES binds to the apical surface of the GroEL ring, thereby capping the opening of the GroEL channel. The chain is Co-chaperonin GroES from Parabacteroides distasonis (strain ATCC 8503 / DSM 20701 / CIP 104284 / JCM 5825 / NCTC 11152).